Here is a 500-residue protein sequence, read N- to C-terminus: L-arabinose isomerase (500 aa).

Residues Glu306, Glu333, His350, and His450 each coordinate Mn(2+).

Belongs to the arabinose isomerase family. Homohexamer. Mn(2+) is required as a cofactor.

The catalysed reaction is beta-L-arabinopyranose = L-ribulose. Its pathway is carbohydrate degradation; L-arabinose degradation via L-ribulose; D-xylulose 5-phosphate from L-arabinose (bacterial route): step 1/3. In terms of biological role, catalyzes the conversion of L-arabinose to L-ribulose. The chain is L-arabinose isomerase from Shigella dysenteriae serotype 1 (strain Sd197).